Here is a 573-residue protein sequence, read N- to C-terminus: Multidrug and toxin extrusion protein 2 (573 aa).

The Cytoplasmic segment spans residues 1 to 46 (MEPAEDSLGATIQPPELVRVPRGRSLRILLGLRGALSPDVRREAAA). A helical transmembrane segment spans residues 47-67 (LVALAGPVFLAQLMIFLISIV). The Extracellular portion of the chain corresponds to 68–81 (SSIFCGHLGKVELD). Residues 82-102 (AVTLAVSVVNVTGISVGTGLA) traverse the membrane as a helical segment. Residues 103–122 (SACDTLMSQSFGGKNLKRVG) lie on the Cytoplasmic side of the membrane. A helical membrane pass occupies residues 123–143 (VILQRGILILLLCCFPCWAIF). Residues 144–161 (LNTERLLLLLRQDPDVAR) are Extracellular-facing. A helical transmembrane segment spans residues 162 to 182 (LAQVYVMICIPALPAAFLFQL). Topologically, residues 183-196 (QTRYLQSQGIIMPQ) are cytoplasmic. The helical transmembrane segment at 197–217 (VIVGIAANVVNVGMNAFLLYA) threads the bilayer. At 218 to 225 (LDLGVVGS) the chain is on the extracellular side. The chain crosses the membrane as a helical span at residues 226-246 (AWANTTSQFFLSALLFLYVWW). The Cytoplasmic segment spans residues 247–266 (KRIHIHTWGGWTRECFQEWS). A helical transmembrane segment spans residues 267-286 (SYTRLAIPSMFMVCIEWWTF). Residues 287–304 (EIGTFLAGLVNVTELGAQ) lie on the Extracellular side of the membrane. A helical membrane pass occupies residues 305-325 (AVIYELASVAYMVPFGFGVAA). The Cytoplasmic portion of the chain corresponds to 326-345 (SVRVGNALGAGNADQARCSC). The helical transmembrane segment at 346-366 (TTVLLCAGVCALLVGILLAAL) threads the bilayer. Residues 367-379 (KDVVAYIFTNDKD) lie on the Extracellular side of the membrane. The helical transmembrane segment at 380 to 400 (IISLVSQVMPIFAPFHLFDAL) threads the bilayer. The Cytoplasmic portion of the chain corresponds to 401-415 (AGTCGGVLRGTGKQK). A helical transmembrane segment spans residues 416 to 436 (IGAVLNTIGYYGFGFPIGVSL). The Extracellular portion of the chain corresponds to 437 to 443 (MFAAKLG). A helical membrane pass occupies residues 444–464 (IIGLWAGLIVCVSFQAFSYLI). Residues 465 to 545 (YILRTNWSRV…VGEVLTGRQL (81 aa)) are Cytoplasmic-facing. Residues 546–566 (VFYRGMALTVSVAVLIAGIVV) traverse the membrane as a helical segment. Over 567-573 (RVFNDRG) the chain is Extracellular.

Belongs to the multi antimicrobial extrusion (MATE) (TC 2.A.66.1) family. Expressed in testis; especially in testicular Leydig cells.

Its subcellular location is the cell membrane. Its function is as follows. Multidrug efflux pump that functions as a H(+)/organic cation antiporter. May mediate testosterone efflux from the Leydig cells in the testes. This Mus musculus (Mouse) protein is Multidrug and toxin extrusion protein 2 (Slc47a2).